The sequence spans 283 residues: Spore coat polysaccharide biosynthesis protein SpsK (283 aa).

It belongs to the dTDP-4-dehydrorhamnose reductase family.

The protein operates within spore coat biogenesis; spore coat polysaccharide biosynthesis. This is Spore coat polysaccharide biosynthesis protein SpsK (spsK) from Bacillus subtilis (strain 168).